The primary structure comprises 186 residues: Elongation factor P (186 aa).

It belongs to the elongation factor P family.

The protein resides in the cytoplasm. It participates in protein biosynthesis; polypeptide chain elongation. Its function is as follows. Involved in peptide bond synthesis. Stimulates efficient translation and peptide-bond synthesis on native or reconstituted 70S ribosomes in vitro. Probably functions indirectly by altering the affinity of the ribosome for aminoacyl-tRNA, thus increasing their reactivity as acceptors for peptidyl transferase. This is Elongation factor P from Streptococcus thermophilus (strain CNRZ 1066).